The sequence spans 134 residues: uncharacterized protein (134 aa).

Helical transmembrane passes span 49–69 (VAVP…SLDV) and 71–91 (LSMT…LNKV).

The protein resides in the cell membrane. This is an uncharacterized protein from Mycobacterium tuberculosis (strain ATCC 25618 / H37Rv).